Reading from the N-terminus, the 436-residue chain is GTPase Der (436 aa).

2 EngA-type G domains span residues 4–167 (PVVA…PKVE) and 176–351 (IRFC…ESHN). GTP contacts are provided by residues 10-17 (GRPNVGKS), 57-61 (DTGGI), 119-122 (NKVD), 182-189 (GRPNVGKS), 229-233 (DTAGM), and 294-297 (NKWD). A KH-like domain is found at 352–436 (IRVQTNVLND…PIRIIARARD (85 aa)).

The protein belongs to the TRAFAC class TrmE-Era-EngA-EngB-Septin-like GTPase superfamily. EngA (Der) GTPase family. Associates with the 50S ribosomal subunit.

Its function is as follows. GTPase that plays an essential role in the late steps of ribosome biogenesis. The sequence is that of GTPase Der from Bacillus cytotoxicus (strain DSM 22905 / CIP 110041 / 391-98 / NVH 391-98).